The following is a 181-amino-acid chain: MSLRLQEKYEKEVVPALMDKFGYKNIMQAPKLEKIVINMGVGEAKDNPKVLESAVNDLTIITGQKPVLTRAKKSIANFKLRENMAIGCKVTLRKQYMYEFADKLMNVALPRVRDFSGVSDKSFDGRGNYSLGIKEQLIFPEIEYDKIDKVRGMDIVFVTTANTDEEAKELLRLFGMPFAQK.

The protein belongs to the universal ribosomal protein uL5 family. As to quaternary structure, part of the 50S ribosomal subunit; part of the 5S rRNA/L5/L18/L25 subcomplex. Contacts the 5S rRNA and the P site tRNA. Forms a bridge to the 30S subunit in the 70S ribosome.

Functionally, this is one of the proteins that bind and probably mediate the attachment of the 5S RNA into the large ribosomal subunit, where it forms part of the central protuberance. In the 70S ribosome it contacts protein S13 of the 30S subunit (bridge B1b), connecting the 2 subunits; this bridge is implicated in subunit movement. Contacts the P site tRNA; the 5S rRNA and some of its associated proteins might help stabilize positioning of ribosome-bound tRNAs. This is Large ribosomal subunit protein uL5 from Clostridium kluyveri (strain NBRC 12016).